A 393-amino-acid chain; its full sequence is Homogentisate phytyltransferase 1, chloroplastic (393 aa).

The transit peptide at methionine 1 to arginine 36 directs the protein to the chloroplast. Transmembrane regions (helical) follow at residues threonine 108 to serine 128, leucine 133 to valine 153, tyrosine 170 to phenylalanine 190, proline 205 to leucine 227, phenylalanine 232 to phenylalanine 252, leucine 271 to isoleucine 291, valine 314 to alanine 334, phenylalanine 338 to alanine 358, and isoleucine 371 to phenylalanine 391.

This sequence belongs to the UbiA prenyltransferase family.

It is found in the plastid. It localises to the chloroplast membrane. It catalyses the reaction phytyl diphosphate + homogentisate + H(+) = 2-methyl-6-phytyl-1,4-benzene-1,4-diol + CO2 + diphosphate. It participates in cofactor biosynthesis; tocopherol biosynthesis. Functionally, involved in the synthesis of tocopherol (vitamin E). Catalyzes the condensation of homogentisate and phytyl diphosphate to form dimethylphytylhydrquinone. Low activity with geranylgeranyl diphosphate as substrate, but no activity with farnesyl diphosphate or solanesyl diphosphate. Tocopherol functions to limit lipid oxidation during seed desiccation, quiescence and germination and early seedling development. Protects thylakoid membrane lipids from photooxidation and is required for low-temperature adaptation. In Arabidopsis thaliana (Mouse-ear cress), this protein is Homogentisate phytyltransferase 1, chloroplastic (HPT1).